The sequence spans 159 residues: MGGLRKPKKKYLAGKPKKIWNKQLLLEELQLMGEYGLRNKRELWLARARLKWITRRARSLLSMTAEERAPLEMPFKEKLYKAGFIEDPNVPLDRILSLDVRAILERRLQTIVYRMGLAKSIYHARQLIVHGHIAIEGRRVTSPGFLVPRELEDKITLVQ.

Residues 106–158 (RRLQTIVYRMGLAKSIYHARQLIVHGHIAIEGRRVTSPGFLVPRELEDKITLV) enclose the S4 RNA-binding domain.

This sequence belongs to the universal ribosomal protein uS4 family. Part of the 30S ribosomal subunit. Contacts protein S5. The interaction surface between S4 and S5 is involved in control of translational fidelity.

Its function is as follows. One of the primary rRNA binding proteins, it binds directly to 16S rRNA where it nucleates assembly of the body of the 30S subunit. Functionally, with S5 and S12 plays an important role in translational accuracy. The protein is Small ribosomal subunit protein uS4 of Pyrobaculum arsenaticum (strain DSM 13514 / JCM 11321 / PZ6).